Reading from the N-terminus, the 337-residue chain is MVTIKDIAQAANVSTSTVSRVISGNPRISMQTREKVKATMKSFNYQPNRAARTLATKQSNTIGIIQKSASIEDSQNPFVLDVLSGIFSKCKNHGYATISTTKGQSIEIELEVQEMIHYHSVDGFIVLYSKKSDPIIDILKSHAMPYVIIGKPLTDDDIIHIDNDNVSASQSLTRYLIDKGHNKFLFVAETGNYEVVKDRIAGHLNAIEQTDSVTDIVYFAKNRHYIRSFFQDLIEHRTLPTVVITSDTLLNHLILSVFYELKLHIPTDIQTATFNDSYLNAFASPPQTTVDIYPKLLGEGAAESAINIIQGHNILNFYKLIPTTIIERESTTTIQEV.

One can recognise an HTH lacI-type domain in the interval M1 to T56. A DNA-binding region (H-T-H motif) is located at residues I4–S23.

Transcriptional repressor of the malA gene for maltase. The protein is HTH-type transcriptional regulator MalR (malR) of Staphylococcus xylosus.